The sequence spans 393 residues: Acetylornithine aminotransferase (393 aa).

Residues 96–97 (GT) and phenylalanine 129 contribute to the pyridoxal 5'-phosphate site. Arginine 132 serves as a coordination point for N(2)-acetyl-L-ornithine. 214 to 217 (DEVQ) is a binding site for pyridoxal 5'-phosphate. Lysine 243 is subject to N6-(pyridoxal phosphate)lysine. Residue serine 271 coordinates N(2)-acetyl-L-ornithine. Position 272 (threonine 272) interacts with pyridoxal 5'-phosphate.

This sequence belongs to the class-III pyridoxal-phosphate-dependent aminotransferase family. ArgD subfamily. Homodimer. Pyridoxal 5'-phosphate serves as cofactor.

It localises to the cytoplasm. It carries out the reaction N(2)-acetyl-L-ornithine + 2-oxoglutarate = N-acetyl-L-glutamate 5-semialdehyde + L-glutamate. It functions in the pathway amino-acid biosynthesis; L-arginine biosynthesis; N(2)-acetyl-L-ornithine from L-glutamate: step 4/4. The polypeptide is Acetylornithine aminotransferase (Rhodobacter capsulatus (strain ATCC BAA-309 / NBRC 16581 / SB1003)).